The chain runs to 58 residues: UPF0339 protein Msl4696 (58 aa).

This sequence belongs to the UPF0339 family.

This Mesorhizobium japonicum (strain LMG 29417 / CECT 9101 / MAFF 303099) (Mesorhizobium loti (strain MAFF 303099)) protein is UPF0339 protein Msl4696.